The sequence spans 737 residues: Tripartite terminase subunit 3 (737 aa).

The short motif at 188 to 194 is the Nuclear localization signal element; sequence VKKRARI. The Walker A motif signature appears at 263–270; that stretch reads VPRRHGKT. The Walker B motif signature appears at 357–362; that stretch reads LLFVDE. The active-site For ATPase activity is the Glu362. Catalysis depends on for nuclease activity residues Asp517, Glu589, and Asp712.

The protein belongs to the herpesviridae TRM3 protein family. Interacts with the terminase subunits TRM1 and TRM2. Interacts with portal protein.

It is found in the host nucleus. Component of the molecular motor that translocates viral genomic DNA in empty capsid during DNA packaging. Forms a tripartite terminase complex together with TRM1 and TRM2 in the host cytoplasm. Once the complex reaches the host nucleus, it interacts with the capsid portal vertex. This portal forms a ring in which genomic DNA is translocated into the capsid. TRM3 carries an RNase H-like nuclease activity that plays an important role for the cleavage of concatemeric viral DNA into unit length genomes. The sequence is that of Tripartite terminase subunit 3 from Gallus gallus (Chicken).